We begin with the raw amino-acid sequence, 135 residues long: UPF0102 protein PGN_1801 (135 aa).

Belongs to the UPF0102 family.

This is UPF0102 protein PGN_1801 from Porphyromonas gingivalis (strain ATCC 33277 / DSM 20709 / CIP 103683 / JCM 12257 / NCTC 11834 / 2561).